The primary structure comprises 165 residues: Chorismate pyruvate-lyase (165 aa).

Substrate contacts are provided by methionine 35, arginine 77, leucine 115, and glutamate 156.

The protein belongs to the UbiC family. In terms of assembly, monomer.

The protein resides in the cytoplasm. The catalysed reaction is chorismate = 4-hydroxybenzoate + pyruvate. The protein operates within cofactor biosynthesis; ubiquinone biosynthesis. Removes the pyruvyl group from chorismate, with concomitant aromatization of the ring, to provide 4-hydroxybenzoate (4HB) for the ubiquinone pathway. The polypeptide is Chorismate pyruvate-lyase (Salmonella agona (strain SL483)).